A 167-amino-acid chain; its full sequence is Fluoride-specific ion channel FluC (167 aa).

4 helical membrane-spanning segments follow: residues 32–52, 69–89, 102–122, and 137–157; these read HVTPIYTIAAISLGASLGALA, IGTLAANLIAAYVVGVTIAYV, FMITGLAGGLSTFSTFTAELF, and LGLHVGGSLALLMLGMLTIGL. Positions 109 and 112 each coordinate Na(+).

It belongs to the fluoride channel Fluc/FEX (TC 1.A.43) family.

It localises to the cell inner membrane. It catalyses the reaction fluoride(in) = fluoride(out). Na(+) is not transported, but it plays an essential structural role and its presence is essential for fluoride channel function. In terms of biological role, fluoride-specific ion channel. Important for reducing fluoride concentration in the cell, thus reducing its toxicity. The sequence is that of Fluoride-specific ion channel FluC from Xanthomonas oryzae pv. oryzae (strain KACC10331 / KXO85).